Reading from the N-terminus, the 413-residue chain is 1-deoxy-D-xylulose 5-phosphate reductoisomerase (413 aa).

NADPH is bound by residues Thr-21, Gly-22, Ser-23, Ile-24, Gly-47, and Asn-127. Lys-128 contributes to the 1-deoxy-D-xylulose 5-phosphate binding site. Glu-129 contacts NADPH. Asp-151 serves as a coordination point for Mn(2+). 1-deoxy-D-xylulose 5-phosphate-binding residues include Ser-152, Glu-153, Ser-177, and His-200. Mn(2+) is bound at residue Glu-153. Residue Gly-206 coordinates NADPH. Residues Ser-213, Asn-218, Lys-219, and Glu-222 each coordinate 1-deoxy-D-xylulose 5-phosphate. Residue Glu-222 coordinates Mn(2+).

The protein belongs to the DXR family. Requires Mg(2+) as cofactor. Mn(2+) serves as cofactor.

The catalysed reaction is 2-C-methyl-D-erythritol 4-phosphate + NADP(+) = 1-deoxy-D-xylulose 5-phosphate + NADPH + H(+). Its pathway is isoprenoid biosynthesis; isopentenyl diphosphate biosynthesis via DXP pathway; isopentenyl diphosphate from 1-deoxy-D-xylulose 5-phosphate: step 1/6. Its function is as follows. Catalyzes the NADPH-dependent rearrangement and reduction of 1-deoxy-D-xylulose-5-phosphate (DXP) to 2-C-methyl-D-erythritol 4-phosphate (MEP). The chain is 1-deoxy-D-xylulose 5-phosphate reductoisomerase from Mycobacterium bovis (strain ATCC BAA-935 / AF2122/97).